The sequence spans 915 residues: Copper-exporting P-type ATPase (915 aa).

2 HMA domains span residues 11–72 (NHFA…YQGG) and 73–134 (TEQT…YQAI). Residues C22, C25, C84, and C87 each coordinate Cu(+). Positions 142–169 (FAPAASIDEKETDTPDAENSSNTEATEA) are disordered. Positions 158-169 (AENSSNTEATEA) are enriched in polar residues. The 65-residue stretch at 172 to 236 (QTLSLLIKGM…AIQSSGYQAE (65 aa)) folds into the HMA 3 domain. Cu(+) is bound by residues C183 and C186. 7 helical membrane-spanning segments follow: residues 265-285 (LGIALGTPLMLWGVFGGNMMI), 293-313 (VWGGIGTICFALLLTAGRHFF), 329-349 (TLVALGTGAAWFYSMLVVAWP), 359-379 (VYFEATAMIIGLISLGHYIET), 474-494 (LVITATGIGAQTMLARIIQMV), 514-534 (VFVPVVVVIAILSAALWYLYG), and 541-561 (YMLVVATTVLIIACPCALGLA). D598 serves as the catalytic 4-aspartylphosphate intermediate. Mg(2+) contacts are provided by D796 and D800. 2 helical membrane passes run 801-821 (APALALADIGIAMGSGSDVAI) and 865-885 (IPIAAGVLYPAFGFLLSPVVA).

This sequence belongs to the cation transport ATPase (P-type) (TC 3.A.3) family. Type IB subfamily.

The protein resides in the cell membrane. It catalyses the reaction Cu(+)(in) + ATP + H2O = Cu(+)(out) + ADP + phosphate + H(+). In terms of biological role, involved in copper export. This Vibrio cholerae serotype O1 (strain ATCC 39315 / El Tor Inaba N16961) protein is Copper-exporting P-type ATPase (copA).